The primary structure comprises 343 residues: Cell invasion protein SipD (343 aa).

The segment at 1-26 (MLNIQNYSASPHPGIVAERPQTPSAS) is disordered. Residues 295 to 322 (KAQEENMKTTLQTLTQKYSNANSLYDNL) are a coiled coil.

The protein belongs to the invasin protein D family.

The protein resides in the secreted. Required for translocation of effector proteins via the type III secretion system SPI-1, which is essential for an efficient bacterial internalization. Probably acts by modulating the secretion of SipA, SipB, and SipC. The sequence is that of Cell invasion protein SipD (sipD) from Salmonella typhimurium (strain LT2 / SGSC1412 / ATCC 700720).